The primary structure comprises 96 residues: Small ribosomal subunit protein uS19 (96 aa).

Belongs to the universal ribosomal protein uS19 family.

In terms of biological role, protein S19 forms a complex with S13 that binds strongly to the 16S ribosomal RNA. In Gemmatimonas aurantiaca (strain DSM 14586 / JCM 11422 / NBRC 100505 / T-27), this protein is Small ribosomal subunit protein uS19.